The sequence spans 612 residues: Putative pentatricopeptide repeat-containing protein At5g40405 (612 aa).

PPR repeat units lie at residues 70–104, 107–141, 142–172, 173–203, 204–238, 239–273, 274–304, 305–339, 340–375, and 376–410; these read TLFALNSMIRAHCKSPVPEKSFDFYRRILSSGNDL, DNYTVNFLVQACTGLRMRETGLQVHGMTIRRGFDN, DPHVQTGLISLYAELGCLDSCHKVFNSIPCP, DFVCRTAMVTACARCGDVVFARKLFEGMPER, DPIAWNAMISGYAQVGESREALNVFHLMQLEGVKV, NGVAMISVLSACTQLGALDQGRWAHSYIERNKIKI, TVRLATTLVDLYAKCGDMEKAMEVFWGMEEK, NVYTWSSALNGLAMNGFGEKCLELFSLMKQDGVTP, NAVTFVSVLRGCSVVGFVDEGQRHFDSMRNEFGIEP, and QLEHYGCLVDLYARAGRLEDAVSIIQQMPMKPHAA. The type E motif stretch occupies residues 411 to 486; it reads VWSSLLHASR…QPGCSVMEVN (76 aa). A type E(+) motif region spans residues 487–517; it reads GEVHEFFVGDKSHPKYTQIDAVWKDISRRLR. Residues 518-612 are type DYW motif; the sequence is LAGYKADTTP…DGHCSCNGFW (95 aa).

It belongs to the PPR family. PCMP-H subfamily.

This chain is Putative pentatricopeptide repeat-containing protein At5g40405 (PCMP-H14), found in Arabidopsis thaliana (Mouse-ear cress).